Here is a 472-residue protein sequence, read N- to C-terminus: ATP synthase subunit beta (472 aa).

155–162 (GGAGVGKT) provides a ligand contact to ATP.

Belongs to the ATPase alpha/beta chains family. As to quaternary structure, F-type ATPases have 2 components, CF(1) - the catalytic core - and CF(0) - the membrane proton channel. CF(1) has five subunits: alpha(3), beta(3), gamma(1), delta(1), epsilon(1). CF(0) has three main subunits: a(1), b(2) and c(9-12). The alpha and beta chains form an alternating ring which encloses part of the gamma chain. CF(1) is attached to CF(0) by a central stalk formed by the gamma and epsilon chains, while a peripheral stalk is formed by the delta and b chains.

The protein resides in the cell membrane. It carries out the reaction ATP + H2O + 4 H(+)(in) = ADP + phosphate + 5 H(+)(out). In terms of biological role, produces ATP from ADP in the presence of a proton gradient across the membrane. The catalytic sites are hosted primarily by the beta subunits. This is ATP synthase subunit beta from Fervidobacterium islandicum.